The chain runs to 1008 residues: Probable transport protein MmpL10 (1008 aa).

The next 12 helical transmembrane spans lie at 23–43 (WPWV…MTVP), 202–222 (IELV…RNPI), 225–245 (LLPL…VSGV), 257–277 (MIVL…VFLI), 301–321 (ALIS…ITFL), 340–360 (IGIA…LVLA), 389–409 (VAYL…ASLV), 835–855 (DLQL…MALL), 862–882 (IYLV…CVLV), 895–915 (VPGL…MLLA), 940–960 (VITA…LSSI), and 961–981 (ATVV…TFIV).

The protein belongs to the resistance-nodulation-cell division (RND) (TC 2.A.6) family. MmpL subfamily.

The protein resides in the cell membrane. This Mycobacterium leprae (strain TN) protein is Probable transport protein MmpL10 (mmpL10).